The sequence spans 341 residues: MRRNSERPVRITEVCLRDGSHVMKHQFTEEQVRFVTRALDEAGMHYIEVSHGDGLGGSTLQYGKSLVNEMKLIEAAVDECKQAQIAVLLIPGIGTIHELKQAANIGAKLVRVATHVTEADVSAQHIQFARELGMEVCGFLMMAHSASVEKLVEQGKLMESYGAEAVYVTDSAGALLPHEVRERIRALRQSLNIEIGFHGHNNLSVAVANTITAIEEGATRIDGSVRCLGAGAGNAQTEVLLAVLDRMGYKLDIDLYKMMDVAEEVVAPLLPVPQEIQKGSLVMGYAGVYSSFLLHAERAAQRFNVDARDILIELGKRKVVGGQEDMILDVAAELAKIKMEV.

In terms of domain architecture, Pyruvate carboxyltransferase spans 9–259 (VRITEVCLRD…KLDIDLYKMM (251 aa)). Residue 17 to 18 (RD) participates in substrate binding. Residue Asp-18 coordinates Mn(2+). His-21 serves as the catalytic Proton acceptor. Residues Ser-171 and His-198 each coordinate substrate. His-198 and His-200 together coordinate Mn(2+). Tyr-289 contributes to the substrate binding site.

Belongs to the 4-hydroxy-2-oxovalerate aldolase family.

The catalysed reaction is (S)-4-hydroxy-2-oxopentanoate = acetaldehyde + pyruvate. This Bacillus cereus (strain 03BB102) protein is 4-hydroxy-2-oxovalerate aldolase (dmpG).